The following is a 286-amino-acid chain: Nucleotide-binding protein PLES_48441 (286 aa).

8-15 (GRSGSGKS) lines the ATP pocket. 60–63 (DARN) is a binding site for GTP.

The protein belongs to the RapZ-like family.

Its function is as follows. Displays ATPase and GTPase activities. This is Nucleotide-binding protein PLES_48441 from Pseudomonas aeruginosa (strain LESB58).